We begin with the raw amino-acid sequence, 58 residues long: Potassium channel toxin alpha-KTx 9.9 (58 aa).

Positions 1-21 are cleaved as a signal peptide; sequence KKTSRLFTLVLIVLAMNVMMA. The propeptide occupies 22–30; it reads IISDPVVEA. 3 disulfide bridges follow: C33–C49, C36–C54, and C40–C56.

The protein belongs to the short scorpion toxin superfamily. Potassium channel inhibitor family. Alpha-KTx 09 subfamily. In terms of tissue distribution, expressed by the venom gland.

It localises to the secreted. Its function is as follows. Potassium channel inhibitor. The polypeptide is Potassium channel toxin alpha-KTx 9.9 (Buthus israelis (Israeli scorpion)).